The chain runs to 362 residues: Alternative oxidase, mitochondrial (362 aa).

Residues 1 to 64 (MNTPKVNILY…RGFTTTSVVR (64 aa)) constitute a mitochondrion transit peptide. The chain crosses the membrane as a helical span at residues 156-176 (LVRFIFLESIAGVPGMVAGML). The Fe cation site is built by E163, E202, and H205. The chain crosses the membrane as a helical span at residues 222–242 (LILGAQGVFFNAMFLSYLVSP). Residues E253, E310, and H313 each contribute to the Fe cation site.

The protein belongs to the alternative oxidase family. Fe cation is required as a cofactor.

It localises to the mitochondrion inner membrane. In terms of biological role, catalyzes cyanide-resistant oxygen consumption. May increase respiration when the cytochrome respiratory pathway is restricted, or in response to low temperatures. The protein is Alternative oxidase, mitochondrial (aod-1) of Gelasinospora sp. (strain S23).